A 118-amino-acid chain; its full sequence is uncharacterized protein (118 aa).

The protein to S.pombe tam6.

The protein localises to the mitochondrion. This is an uncharacterized protein from Saccharomyces cerevisiae (strain ATCC 204508 / S288c) (Baker's yeast).